The primary structure comprises 173 residues: Transcription factor S-II-related protein (173 aa).

In terms of domain architecture, TFIIS central spans 9–129 (ISDKEREIVI…EETLNQMATV (121 aa)). A TFIIS-type zinc finger spans residues 130–170 (EWKPCYACKNTSYHFYQLQTRSADEPMTTFYICKNCMKTYK). Residues Cys134, Cys137, Cys162, and Cys165 each contribute to the Zn(2+) site.

It belongs to the TFS-II family.

This Acanthamoeba polyphaga mimivirus (APMV) protein is Transcription factor S-II-related protein.